The chain runs to 159 residues: Cyanate hydratase (159 aa).

Active-site residues include Arg103, Glu106, and Ser129.

Belongs to the cyanase family.

It catalyses the reaction cyanate + hydrogencarbonate + 3 H(+) = NH4(+) + 2 CO2. Functionally, catalyzes the reaction of cyanate with bicarbonate to produce ammonia and carbon dioxide. The sequence is that of Cyanate hydratase from Blastomyces gilchristii (strain SLH14081) (Blastomyces dermatitidis).